Consider the following 206-residue polypeptide: Recombination protein RecR (206 aa).

A C4-type zinc finger spans residues 60-75 (CARCNTFCEGGLCDIC). In terms of domain architecture, Toprim spans 83–178 (RRLMVVHMPA…KVSRLSQGIP (96 aa)).

Belongs to the RecR family.

Functionally, may play a role in DNA repair. It seems to be involved in an RecBC-independent recombinational process of DNA repair. It may act with RecF and RecO. The sequence is that of Recombination protein RecR from Neisseria gonorrhoeae (strain NCCP11945).